The primary structure comprises 204 residues: uncharacterized protein (204 aa).

Its subcellular location is the cytoplasm. It is found in the nucleus. This is an uncharacterized protein from Schizosaccharomyces pombe (strain 972 / ATCC 24843) (Fission yeast).